Consider the following 413-residue polypeptide: Multidrug resistance protein MdtA (413 aa).

The first 32 residues, 1-32, serve as a signal peptide directing secretion; the sequence is MNAKRIRGLLIFAAVIAIAVLIWRHFTQTSPA. Polar residues predominate over residues 32–46; it reads AAPGTSEQHAARTSH. Residues 32–59 are disordered; it reads AAPGTSEQHAARTSHSGNNSSGNGGGRR.

The protein belongs to the membrane fusion protein (MFP) (TC 8.A.1) family. As to quaternary structure, part of a tripartite efflux system composed of MdtA, MdtB and MdtC.

Its subcellular location is the cell inner membrane. In Pectobacterium carotovorum subsp. carotovorum (strain PC1), this protein is Multidrug resistance protein MdtA.